A 513-amino-acid chain; its full sequence is Glutamyl-tRNA(Gln) amidotransferase subunit A (513 aa).

Catalysis depends on charge relay system residues Lys85 and Ser160. Residue Ser184 is the Acyl-ester intermediate of the active site.

It belongs to the amidase family. GatA subfamily. In terms of assembly, heterotrimer of A, B and C subunits.

The catalysed reaction is L-glutamyl-tRNA(Gln) + L-glutamine + ATP + H2O = L-glutaminyl-tRNA(Gln) + L-glutamate + ADP + phosphate + H(+). In terms of biological role, allows the formation of correctly charged Gln-tRNA(Gln) through the transamidation of misacylated Glu-tRNA(Gln) in organisms which lack glutaminyl-tRNA synthetase. The reaction takes place in the presence of glutamine and ATP through an activated gamma-phospho-Glu-tRNA(Gln). This Bifidobacterium longum subsp. infantis (strain ATCC 15697 / DSM 20088 / JCM 1222 / NCTC 11817 / S12) protein is Glutamyl-tRNA(Gln) amidotransferase subunit A.